The sequence spans 216 residues: Trimethylamine corrinoid protein 1 (216 aa).

The B12-binding N-terminal domain occupies Met1–Lys92. Residues Leu94 to Leu216 form the B12-binding domain. Position 107 (His107) interacts with methylcob(III)alamin.

It belongs to the methylamine corrinoid protein family. As to quaternary structure, can form a complex with MttB.

It functions in the pathway one-carbon metabolism; methanogenesis from trimethylamine. Functionally, acts probably as a methyl group carrier between MttB and either MtbA or MtaA. In Methanosarcina acetivorans (strain ATCC 35395 / DSM 2834 / JCM 12185 / C2A), this protein is Trimethylamine corrinoid protein 1 (mttC1).